A 568-amino-acid chain; its full sequence is Sulfite reductase [NADPH] hemoprotein beta-component (568 aa).

[4Fe-4S] cluster contacts are provided by cysteine 426, cysteine 432, cysteine 471, and cysteine 475. Residue cysteine 475 coordinates siroheme.

Belongs to the nitrite and sulfite reductase 4Fe-4S domain family. In terms of assembly, alpha(8)-beta(8). The alpha component is a flavoprotein, the beta component is a hemoprotein. It depends on siroheme as a cofactor. [4Fe-4S] cluster is required as a cofactor.

The catalysed reaction is hydrogen sulfide + 3 NADP(+) + 3 H2O = sulfite + 3 NADPH + 4 H(+). Its pathway is sulfur metabolism; hydrogen sulfide biosynthesis; hydrogen sulfide from sulfite (NADPH route): step 1/1. Its function is as follows. Component of the sulfite reductase complex that catalyzes the 6-electron reduction of sulfite to sulfide. This is one of several activities required for the biosynthesis of L-cysteine from sulfate. The polypeptide is Sulfite reductase [NADPH] hemoprotein beta-component (Xylella fastidiosa (strain M12)).